The primary structure comprises 147 residues: ATP synthase epsilon chain 2 (147 aa).

This sequence belongs to the ATPase epsilon chain family. F-type ATPases have 2 components, CF(1) - the catalytic core - and CF(0) - the membrane proton channel. CF(1) has five subunits: alpha(3), beta(3), gamma(1), delta(1), epsilon(1). CF(0) has three main subunits: a, b and c.

Its subcellular location is the cell inner membrane. Produces ATP from ADP in the presence of a proton gradient across the membrane. The protein is ATP synthase epsilon chain 2 of Photobacterium profundum (strain SS9).